A 133-amino-acid chain; its full sequence is ATP synthase epsilon chain, chloroplastic (133 aa).

The protein belongs to the ATPase epsilon chain family. As to quaternary structure, F-type ATPases have 2 components, CF(1) - the catalytic core - and CF(0) - the membrane proton channel. CF(1) has five subunits: alpha(3), beta(3), gamma(1), delta(1), epsilon(1). CF(0) has three main subunits: a, b and c.

It localises to the plastid. The protein localises to the chloroplast thylakoid membrane. Its function is as follows. Produces ATP from ADP in the presence of a proton gradient across the membrane. This chain is ATP synthase epsilon chain, chloroplastic, found in Zygnema circumcarinatum (Green alga).